The chain runs to 751 residues: Proton-associated sugar transporter A (751 aa).

The next 6 helical transmembrane spans lie at 93–113, 123–143, 155–175, 191–211, 233–253, and 268–288; these read ILFGIEFSYAMETAYVTPVLL, SLVWFISPILGFLLQPLLGAW, RPFILVLAIGALLGLSLLLNG, WGILLTVCGVVLMDFSADSAD, IHALMAGLGGGFGYVVGGIHW, and VIYVFTAITLSVTTVLTLISI. A Phosphothreonine modification is found at threonine 500. Helical transmembrane passes span 536–556, 576–596, 606–626, 630–650, 688–708, and 710–730; these read GWLSFEGMLLFYTDFMGEVVF, VTMGCWGMCIYAFSAAFYSAI, VRTLYFIAYLAFGLGTGLATL, LYVVLSLCTTYGILFSTLCTL, FLAQILVSLVLGPLTSAVGSA, and GVMYFSSLVSFLGCLYSSLCV.

This sequence belongs to the glycoside-pentoside-hexuronide (GPH) cation symporter transporter (TC 2.A.2) family.

The protein resides in the membrane. The enzyme catalyses D-galactose(in) + H(+)(in) = D-galactose(out) + H(+)(out). It catalyses the reaction D-glucose(out) + H(+)(out) = D-glucose(in) + H(+)(in). Proton-associated glucose transporter in the brain. This chain is Proton-associated sugar transporter A, found in Mus musculus (Mouse).